Reading from the N-terminus, the 459-residue chain is uncharacterized protein (459 aa).

Residues 13–145 enclose the B12-binding domain; the sequence is TESAIKRVVG…DALSKGRELK (133 aa). The Radical SAM core domain maps to 188 to 402; it reads ADGVPFGVVM…MNWRKYTTID (215 aa). Residues Cys-202, Cys-206, and Cys-209 each contribute to the [4Fe-4S] cluster site.

This sequence belongs to the methyltransferase superfamily. The cofactor is [4Fe-4S] cluster.

This is an uncharacterized protein from Pyrococcus horikoshii (strain ATCC 700860 / DSM 12428 / JCM 9974 / NBRC 100139 / OT-3).